Consider the following 394-residue polypeptide: Anthocyanidin 3-O-glucosyltransferase 6 (394 aa).

Aspartate 37 serves as the catalytic Charge relay. Positions 59, 267, 269, 284, 287, 288, 289, and 292 each coordinate UDP-alpha-D-glucose. Alanine 307 provides a ligand contact to an anthocyanidin. 2 residues coordinate UDP-alpha-D-glucose: glutamate 308 and glutamine 309.

This sequence belongs to the UDP-glycosyltransferase family. Expressed in cotyledons and leaves.

It catalyses the reaction an anthocyanidin + UDP-alpha-D-glucose + H(+) = an anthocyanidin 3-O-beta-D-glucoside + UDP. The protein operates within pigment biosynthesis; anthocyanin biosynthesis. In the presence of other necessary color factors, this glycosylation reaction allows the accumulation of anthocyanin pigments. May be involved in glycosylation of unstable cyanohydrins to produce stable cyanoglucosides. The protein is Anthocyanidin 3-O-glucosyltransferase 6 (GT6) of Manihot esculenta (Cassava).